We begin with the raw amino-acid sequence, 124 residues long: Hemoglobin subunit alpha (124 aa).

The 124-residue stretch at 1–124 (PLSAADKTII…VAKALSSHYR (124 aa)) folds into the Globin domain. An O2-binding site is contributed by His57. Residue His79 coordinates heme b.

Belongs to the globin family. Hb 1 is a heterotetramer of two alpha and two beta-1 chains. Hb 2 is a heterotetramer of two alpha and two beta-2 chains. Hb 3 is a heterotetramer of two alpha and two beta-3 chains. In terms of tissue distribution, red blood cells (at protein level).

In terms of biological role, involved in oxygen transport from gills to the various peripheral tissues. The polypeptide is Hemoglobin subunit alpha (Somniosus microcephalus (Greenland sleeper shark)).